The chain runs to 284 residues: Homeobox protein Hox-D13 (284 aa).

Residues 217-276 (GRKKRVPYTKTQLKELEREYATNKFITKEKRRRISTATNLTERQVTIWFQNRRVKEKKVV) constitute a DNA-binding region (homeobox).

Belongs to the Abd-B homeobox family.

The protein resides in the nucleus. Its function is as follows. Sequence-specific transcription factor that binds gene promoters and activates their transcription. Part of a developmental regulatory system that provides cells with specific positional identities on the anterior-posterior axis. This chain is Homeobox protein Hox-D13 (HOXD13), found in Heterodontus francisci (Horn shark).